A 478-amino-acid polypeptide reads, in one-letter code: Endoplasmic reticulum oxidoreductin-1 (478 aa).

The signal sequence occupies residues 1 to 20 (MREPLLQLIVLSLIIIVVNT). Cystine bridges form between cysteine 28–cysteine 41, cysteine 30–cysteine 39, cysteine 79–cysteine 384, cysteine 88–cysteine 93, cysteine 209–cysteine 230, and cysteine 387–cysteine 390. The tract at residues 117–143 (AAVKEEEDDDAEKCADAGNNIDPMDRT) is disordered. 3 residues coordinate FAD: arginine 188, threonine 190, and tryptophan 201. Residues serine 241, histidine 244, arginine 283, and arginine 295 each coordinate FAD. A glycan (N-linked (GlcNAc...) asparagine) is linked at asparagine 377. The interval 459-478 (ESVMNTAADGPPRKSNKIDL) is disordered.

The protein belongs to the EROs family. As to quaternary structure, may function both as a monomer and a homodimer. FAD serves as cofactor.

The protein localises to the endoplasmic reticulum membrane. Oxidoreductase involved in disulfide bond formation in the endoplasmic reticulum. Efficiently reoxidizes pdi-1, the enzyme catalyzing protein disulfide formation, in order to allow pdi-1 to sustain additional rounds of disulfide formation. Following pdi reoxidation, passes its electrons to molecular oxygen via FAD, leading to the production of reactive oxygen species (ROS) in the cell. This chain is Endoplasmic reticulum oxidoreductin-1 (ero-1), found in Caenorhabditis elegans.